A 39-amino-acid polypeptide reads, in one-letter code: KELNSNHDGADETSEKEQQEAIEHIDEVQNEIDRLNETA.

A disordered region spans residues 1-39 (KELNSNHDGADETSEKEQQEAIEHIDEVQNEIDRLNETA).

It to human SET/PHAPII protein. In terms of assembly, oligomer.

It is found in the cytoplasm. Functionally, has a role in the physiological regulation of fucosylation processes. This chain is Fuctinin-3, found in Rattus norvegicus (Rat).